Consider the following 482-residue polypeptide: Chromosomal replication initiator protein DnaA (482 aa).

The domain I, interacts with DnaA modulators stretch occupies residues 1–71; it reads MKQSILFERV…TGLFQAEDPE (71 aa). The segment at 71–139 is domain II; the sequence is EILKIEVLVR…ASFGSPLFGS (69 aa). Positions 140–362 are domain III, AAA+ region; the sequence is PLDSRFTFDT…GAFNQLVFRR (223 aa). Glycine 186, glycine 188, lysine 189, and threonine 190 together coordinate ATP. Residues 363 to 482 are domain IV, binds dsDNA; sequence SFEPNLSIER…VELLKRLINE (120 aa).

Belongs to the DnaA family. Oligomerizes as a right-handed, spiral filament on DNA at oriC.

It localises to the cytoplasm. Plays an essential role in the initiation and regulation of chromosomal replication. ATP-DnaA binds to the origin of replication (oriC) to initiate formation of the DNA replication initiation complex once per cell cycle. Binds the DnaA box (a 9 base pair repeat at the origin) and separates the double-stranded (ds)DNA. Forms a right-handed helical filament on oriC DNA; dsDNA binds to the exterior of the filament while single-stranded (ss)DNA is stabiized in the filament's interior. The ATP-DnaA-oriC complex binds and stabilizes one strand of the AT-rich DNA unwinding element (DUE), permitting loading of DNA polymerase. After initiation quickly degrades to an ADP-DnaA complex that is not apt for DNA replication. Binds acidic phospholipids. This is Chromosomal replication initiator protein DnaA from Rhizobium johnstonii (strain DSM 114642 / LMG 32736 / 3841) (Rhizobium leguminosarum bv. viciae).